Reading from the N-terminus, the 181-residue chain is Adenylate kinase (181 aa).

Position 10–15 (10–15 (GAGKGT)) interacts with ATP. Residues 30–59 (STGELFRRNIEKDTKLGHEAKKYLDAGDLV) are NMP. AMP-binding positions include Thr31, Arg36, 57-59 (DLV), 85-88 (GYPR), and Gln92. Residues 126-132 (GRGRADD) form an LID region. Arg127 lines the ATP pocket. Arg129 and Arg140 together coordinate AMP. An ATP-binding site is contributed by Gly166.

It belongs to the adenylate kinase family. In terms of assembly, monomer.

The protein localises to the cytoplasm. The enzyme catalyses AMP + ATP = 2 ADP. The protein operates within purine metabolism; AMP biosynthesis via salvage pathway; AMP from ADP: step 1/1. Catalyzes the reversible transfer of the terminal phosphate group between ATP and AMP. Plays an important role in cellular energy homeostasis and in adenine nucleotide metabolism. In Mycobacterium leprae (strain Br4923), this protein is Adenylate kinase.